Reading from the N-terminus, the 364-residue chain is Putative protein C31H2.4 (364 aa).

VOC domains are found at residues 6-134 and 161-320; these read AIHH…LGEF and LMDH…IFSK. Fe cation-binding residues include histidine 164, histidine 248, and glutamate 331.

This sequence belongs to the 4HPPD family. Requires Fe cation as cofactor.

This is Putative protein C31H2.4 from Caenorhabditis elegans.